The following is a 271-amino-acid chain: Interleukin-1 alpha (271 aa).

A propeptide spanning residues 1–112 (MAKVPDMFED…DSEEEIIKPR (112 aa)) is cleaved from the precursor. An N6-acetyllysine modification is found at lysine 82. 2 N6-myristoyl lysine lipidation sites follow: lysine 82 and lysine 83. The interval 82 to 86 (KKRRL) is nuclear localization signal (NLS). Serine 87 carries the post-translational modification Phosphoserine. N-linked (GlcNAc...) asparagine glycans are attached at residues asparagine 102 and asparagine 141.

Belongs to the IL-1 family. In terms of assembly, monomer. Interacts with TMED10; the interaction mediates the translocation from the cytoplasm into the ERGIC (endoplasmic reticulum-Golgi intermediate compartment) and thereby secretion. Interacts with IL1R1. Interacts with S100A13; this interaction is the first step in the export of IL1A, followed by direct translocation of this complex across the plasma membrane. Acetylated within its nuclear localization sequence, which impacts subcellular localization. Post-translationally, proteolytic processed by CAPN1 in a calcium-dependent manner. Cleavage from 31 kDa precursor to 18 kDa biologically active molecules. In terms of processing, phosphorylated. Phosphorylation greatly enhances susceptibility to digestion and promotes the conversion of pre-IL1A alpha to the biologically active IL1A.

It localises to the nucleus. The protein localises to the cytoplasm. The protein resides in the secreted. Cytokine constitutively present intracellularly in nearly all resting non-hematopoietic cells that plays an important role in inflammation and bridges the innate and adaptive immune systems. After binding to its receptor IL1R1 together with its accessory protein IL1RAP, forms the high affinity interleukin-1 receptor complex. Signaling involves the recruitment of adapter molecules such as MYD88, IRAK1 or IRAK4. In turn, mediates the activation of NF-kappa-B and the three MAPK pathways p38, p42/p44 and JNK pathways. Within the cell, acts as an alarmin and cell death results in its liberation in the extracellular space after disruption of the cell membrane to induce inflammation and alert the host to injury or damage. In addition to its role as a danger signal, which occurs when the cytokine is passively released by cell necrosis, directly senses DNA damage and acts as a signal for genotoxic stress without loss of cell integrity. The sequence is that of Interleukin-1 alpha (IL1A) from Homo sapiens (Human).